The primary structure comprises 290 residues: Pyridoxal kinase PdxY (290 aa).

Substrate-binding positions include Ser-12 and 47–48 (TQ). ATP is bound by residues Asp-114, Glu-151, Lys-184, and 211-214 (RPLL). A substrate-binding site is contributed by Asp-225.

This sequence belongs to the pyridoxine kinase family. PdxY subfamily. In terms of assembly, homodimer. It depends on Mg(2+) as a cofactor.

It catalyses the reaction pyridoxal + ATP = pyridoxal 5'-phosphate + ADP + H(+). It participates in cofactor metabolism; pyridoxal 5'-phosphate salvage; pyridoxal 5'-phosphate from pyridoxal: step 1/1. Functionally, pyridoxal kinase involved in the salvage pathway of pyridoxal 5'-phosphate (PLP). Catalyzes the phosphorylation of pyridoxal to PLP. This is Pyridoxal kinase PdxY from Pseudomonas putida (strain GB-1).